The chain runs to 64 residues: Arasin 1 (64 aa).

An N-terminal signal peptide occupies residues 1-25 (MERRTLLVVLLVCSCVVAAAAEASP). The segment at 22-43 (EASPSRWPSPGRPRPFPGRPKP) is disordered. The segment at 26–48 (SRWPSPGRPRPFPGRPKPIFRPR) is pro/Arg-rich region responsible for antibacterial and antifungal activity. The segment covering 31–43 (PGRPRPFPGRPKP) has biased composition (pro residues). Positions 49–62 (PCNCYAPPCPCDRW) are cystein-containing C-terminal region important for stability but not essential for antimicrobial activity. 2 disulfides stabilise this stretch: C50/C59 and C52/C57. The propeptide occupies 63 to 64 (RH).

Interacts with chitin through the N-terminal region (26-48). This interaction may be important, since chitin is a component of the fungal cell wall, as well as of the crab exoskeleton (permitting a possible action of arasin in wound healing in case of lesions). Post-translationally, disulfide bonds are important for activity especially against Gram-negative bacteria, since the linearization of the peptide causes a strong decrease of activity on these bacteria. As to expression, mainly expressed in hemocytes. No or very low expression in heart, gills, inestines, and epidermis.

Antimicrobial peptide that has a large activity spectrum with activity against Gram-positive, Gram-negative bacteria, as well as against fungi. Shows activity at micromolar concentrations. Displays minimal inhibitory concentration (MIC) values lower than minimal bactericidal concentrations (MBC). Synthetic peptides with similar activities than the full length peptide (composed of the first 23 or 25 amino acids (Arasin 1(26-48) or Arasin 1(26-50))) may have a dual mode of action depending on the peptide concentrations. At MIC concentrations, the peptide penetrates into the cytoplasm of target cells (tested on the Gram-negative E.coli). The two inner membrane proteins YgdD and SbmA may be required for this uptake. At concentrations higher than MIC, arasin may act by disrupting membranes. Full-length and N-terminal peptides do not show hemolytic activity. This Hyas araneus (Atlantic lyre crab) protein is Arasin 1.